Reading from the N-terminus, the 485-residue chain is Glutamyl-tRNA(Gln) amidotransferase subunit A (485 aa).

Catalysis depends on charge relay system residues K79 and S154. The active-site Acyl-ester intermediate is the S178.

This sequence belongs to the amidase family. GatA subfamily. As to quaternary structure, heterotrimer of A, B and C subunits.

It carries out the reaction L-glutamyl-tRNA(Gln) + L-glutamine + ATP + H2O = L-glutaminyl-tRNA(Gln) + L-glutamate + ADP + phosphate + H(+). Functionally, allows the formation of correctly charged Gln-tRNA(Gln) through the transamidation of misacylated Glu-tRNA(Gln) in organisms which lack glutaminyl-tRNA synthetase. The reaction takes place in the presence of glutamine and ATP through an activated gamma-phospho-Glu-tRNA(Gln). The polypeptide is Glutamyl-tRNA(Gln) amidotransferase subunit A (Clostridium novyi (strain NT)).